The following is a 155-amino-acid chain: Protein SREK1IP1 (155 aa).

The CCHC-type zinc finger occupies Ala-13–Asn-30. The segment at Asp-43–Asp-155 is disordered. Basic and acidic residues predominate over residues Glu-58–Lys-74. Residues Lys-75 to His-93 show a composition bias toward basic residues. Positions Ser-94–Lys-103 are enriched in basic and acidic residues. A compositionally biased stretch (basic residues) spans Ala-104–Arg-137. Residues Ser-140–Asp-155 show a composition bias toward low complexity.

Possible splicing regulator involved in the control of cellular survival. This chain is Protein SREK1IP1 (srek1ip1), found in Xenopus tropicalis (Western clawed frog).